A 56-amino-acid polypeptide reads, in one-letter code: Cecropin-A2 (56 aa).

The residue at position 55 (R55) is an Arginine amide.

Belongs to the cecropin family.

It localises to the secreted. Its function is as follows. Cecropins have lytic and antibacterial activity against several Gram-positive and Gram-negative bacteria. This chain is Cecropin-A2 (CecA2), found in Drosophila yakuba (Fruit fly).